The chain runs to 881 residues: Envelope glycoprotein gp160 (881 aa).

The N-terminal stretch at M1 to C22 is a signal peptide. Residues T23–G696 lie on the Extracellular side of the membrane. Residue N37 is glycosylated (N-linked (GlcNAc...) asparagine; by host). A disulfide bridge connects residues C44 and C57. N-linked (GlcNAc...) asparagine; by host glycosylation is found at N70, N114, N148, N158, N173, N186, N200, N204, N214, N246, N249, N280, N286, N297, N308, N318, N373, and N379. 5 cysteine pairs are disulfide-bonded: C101-C222, C108-C213, C113-C170, C235-C265, and C245-C257. The interval C113–S169 is V1. Residues C170–C213 are V2. The tract at residues C313–W345 is V3. C313 and C346 are joined by a disulfide. 2 cysteine pairs are disulfide-bonded: C397–C461 and C404–C434. Positions C404–C434 are V4. N-linked (GlcNAc...) asparagine; by host glycans are attached at residues N462 and N478. The segment at G477–M484 is V5. Positions G528–V548 are fusion peptide. Residues L591–Q607 are immunosuppression. Residues N627, N636, and N652 are each glycosylated (N-linked (GlcNAc...) asparagine; by host). A coiled-coil region spans residues N636 to M668. Positions K673–Q694 are MPER; binding to GalCer. The chain crosses the membrane as a helical span at residues I697–A717. The Cytoplasmic segment spans residues K718–L881. The YXXV motif; contains endocytosis signal signature appears at Y723–V726. The tract at residues T737–N761 is disordered. Residue C789 is the site of S-palmitoyl cysteine; by host attachment. The short motif at L880–L881 is the Di-leucine internalization motif element.

The mature envelope protein (Env) consists of a homotrimer of non-covalently associated gp120-gp41 heterodimers. The resulting complex protrudes from the virus surface as a spike. Interacts with host CD4 and CCR5. Gp120 also interacts with the C-type lectins CD209/DC-SIGN and CLEC4M/DC-SIGNR (collectively referred to as DC-SIGN(R)). As to quaternary structure, the mature envelope protein (Env) consists of a homotrimer of non-covalently associated gp120-gp41 heterodimers. The resulting complex protrudes from the virus surface as a spike. Post-translationally, specific enzymatic cleavages in vivo yield mature proteins. Envelope glycoproteins are synthesized as an inactive precursor that is heavily N-glycosylated and processed likely by host cell furin in the Golgi to yield the mature SU and TM proteins. The cleavage site between SU and TM requires the minimal sequence [KR]-X-[KR]-R. In terms of processing, palmitoylation of the transmembrane protein and of Env polyprotein (prior to its proteolytic cleavage) is essential for their association with host cell membrane lipid rafts. Palmitoylation is therefore required for envelope trafficking to classical lipid rafts, but not for viral replication.

It is found in the virion membrane. Its subcellular location is the host cell membrane. The protein resides in the host endosome membrane. The surface protein gp120 (SU) attaches the virus to the host lymphoid cell by binding to the primary receptor CD4. This interaction induces a structural rearrangement creating a high affinity binding site for a chemokine coreceptor like CCR5. This peculiar 2 stage receptor-interaction strategy allows gp120 to maintain the highly conserved coreceptor-binding site in a cryptic conformation, protected from neutralizing antibodies. These changes are transmitted to the transmembrane protein gp41 and are thought to activate its fusogenic potential by unmasking its fusion peptide. Functionally, surface protein gp120 (SU) may target the virus to gut-associated lymphoid tissue (GALT) by binding host ITGA4/ITGB7 (alpha-4/beta-7 integrins), a complex that mediates T-cell migration to the GALT. Interaction between gp120 and ITGA4/ITGB7 would allow the virus to enter GALT early in the infection, infecting and killing most of GALT's resting CD4+ T-cells. This T-cell depletion is believed to be the major insult to the host immune system leading to AIDS. In terms of biological role, the surface protein gp120 is a ligand for CD209/DC-SIGN and CLEC4M/DC-SIGNR, which are respectively found on dendritic cells (DCs), and on endothelial cells of liver sinusoids and lymph node sinuses. These interactions allow capture of viral particles at mucosal surfaces by these cells and subsequent transmission to permissive cells. DCs are professional antigen presenting cells, critical for host immunity by inducing specific immune responses against a broad variety of pathogens. They act as sentinels in various tissues where they take up antigen, process it, and present it to T-cells following migration to lymphoid organs. SIV subverts the migration properties of dendritic cells to gain access to CD4+ T-cells in lymph nodes. Virus transmission to permissive T-cells occurs either in trans (without DCs infection, through viral capture and transmission), or in cis (following DCs productive infection, through the usual CD4-gp120 interaction), thereby inducing a robust infection. In trans infection, bound virions remain infectious over days and it is proposed that they are not degraded, but protected in non-lysosomal acidic organelles within the DCs close to the cell membrane thus contributing to the viral infectious potential during DCs' migration from the periphery to the lymphoid tissues. On arrival at lymphoid tissues, intact virions recycle back to DCs' cell surface allowing virus transmission to CD4+ T-cells. Virion capture also seems to lead to MHC-II-restricted viral antigen presentation, and probably to the activation of SIV-specific CD4+ cells. Its function is as follows. The transmembrane protein gp41 (TM) acts as a class I viral fusion protein. Under the current model, the protein has at least 3 conformational states: pre-fusion native state, pre-hairpin intermediate state, and post-fusion hairpin state. During fusion of viral and target intracellular membranes, the coiled coil regions (heptad repeats) assume a trimer-of-hairpins structure, positioning the fusion peptide in close proximity to the C-terminal region of the ectodomain. The formation of this structure appears to drive apposition and subsequent fusion of viral and target cell membranes. Complete fusion occurs in host cell endosomes. The virus undergoes clathrin-dependent internalization long before endosomal fusion, thus minimizing the surface exposure of conserved viral epitopes during fusion and reducing the efficacy of inhibitors targeting these epitopes. Membranes fusion leads to delivery of the nucleocapsid into the cytoplasm. The envelope glycoprotein gp160 precursor down-modulates cell surface CD4 antigen by interacting with it in the endoplasmic reticulum and blocking its transport to the cell surface. Functionally, the gp120-gp41 heterodimer allows rapid transcytosis of the virus through CD4 negative cells such as simple epithelial monolayers of the intestinal, rectal and endocervical epithelial barriers. Both gp120 and gp41 specifically recognize glycosphingolipids galactosyl-ceramide (GalCer) or 3' sulfo-galactosyl-ceramide (GalS) present in the lipid rafts structures of epithelial cells. Binding to these alternative receptors allows the rapid transcytosis of the virus through the epithelial cells. This transcytotic vesicle-mediated transport of virions from the apical side to the basolateral side of the epithelial cells does not involve infection of the cells themselves. This Simian immunodeficiency virus (isolate K78) (SIV-mac) protein is Envelope glycoprotein gp160 (env).